We begin with the raw amino-acid sequence, 156 residues long: Small ribosomal subunit protein uS7 (156 aa).

This sequence belongs to the universal ribosomal protein uS7 family. As to quaternary structure, part of the 30S ribosomal subunit. Contacts proteins S9 and S11.

Its function is as follows. One of the primary rRNA binding proteins, it binds directly to 16S rRNA where it nucleates assembly of the head domain of the 30S subunit. Is located at the subunit interface close to the decoding center, probably blocks exit of the E-site tRNA. The protein is Small ribosomal subunit protein uS7 (rpsG) of Geobacillus stearothermophilus (Bacillus stearothermophilus).